The sequence spans 1325 residues: Nephrocystin-3 (1325 aa).

A disordered region spans residues 1–20; sequence MGTASSLVSPTGGEVIEDTY. G2 carries N-myristoyl glycine lipidation. Positions 107 to 203 form a coiled coil; the sequence is SMGRREAKLD…QRLQAQGIQV (97 aa). 11 TPR repeats span residues 467-500, 881-914, 916-937, 938-971, 980-1013, 1022-1055, 1088-1121, 1130-1163, 1172-1205, 1214-1247, and 1256-1289; these read TPEE…AHEL, CLLN…KGAM, TEYF…MLCL, ADLY…RETA, AQSL…SENA, AREL…RQQA, ARTL…RERV, AQSL…RRRA, AYTV…RQKS, ATAL…YEDS, and GETL…KEAE. The tract at residues 1293–1325 is disordered; it reads LGGKAPSRQSSSGDTFLFKTTHSPNVFLPQGQS. The segment covering 1299–1325 has biased composition (polar residues); that stretch reads SRQSSSGDTFLFKTTHSPNVFLPQGQS.

In terms of assembly, interacts with NPHP1 and INVS/NPHP2. Interacts (when myristoylated) with UNC119 and UNC119B; interaction is required for localization to cilium. Interacts with CEP164. Component of a complex containing at least ANKS6, INVS, NEK8 and NPHP3. ANKS6 may organize complex assembly by linking INVS and NPHP3 to NEK8 and INVS may target the complex to the proximal ciliary axoneme.

The protein resides in the cell projection. Its subcellular location is the cilium. Required for normal ciliary development and function. Inhibits disheveled-1-induced canonical Wnt-signaling activity and may also play a role in the control of non-canonical Wnt signaling that regulates planar cell polarity. Probably acts as a molecular switch between different Wnt signaling pathways. Required for proper convergent extension cell movements. The sequence is that of Nephrocystin-3 (Nphp3) from Mus musculus (Mouse).